A 161-amino-acid polypeptide reads, in one-letter code: Globin CTT-VIIB-6 (161 aa).

The first 16 residues, 1–16 (MKFFAVLALCIVGAIA), serve as a signal peptide directing secretion. A Globin domain is found at 18-161 (PLTADEASLV…NTFAIVVPRL (144 aa)). Positions 76 and 111 each coordinate heme b.

The protein belongs to the globin family. In terms of assembly, homodimer.

This chain is Globin CTT-VIIB-6 (CTT-7B6), found in Chironomus thummi thummi (Midge).